Consider the following 185-residue polypeptide: Ribosome-recycling factor (185 aa).

The protein belongs to the RRF family.

The protein resides in the cytoplasm. Its function is as follows. Responsible for the release of ribosomes from messenger RNA at the termination of protein biosynthesis. May increase the efficiency of translation by recycling ribosomes from one round of translation to another. In Corynebacterium jeikeium (strain K411), this protein is Ribosome-recycling factor.